The following is a 518-amino-acid chain: MRGALAGLSLATLATASPVLVNSIHNDAAPIISASNAKEIADNYMIKFKDHVTQNLAAEHHGWVQDLHEKTQVAKTELRKRSQSPMVDDIFNGLKHTYNIAGGLMGYAGHFDEDVIEQIRRHPDVELVERDQEVHVLGSESEVEKNAPWGLARISHRDSLSFGTFNKYLYTEDGGEGVDVYVVDTGTNVDHVDFEGRASWGKTIPQGDADEDGNGHGTHCSGTVAGKKYGVAKKAHVKAVKVLRSNGSGSMSDVVKGVEYAAESHLEQVSITKKGKRKGFKGSTANMSLGGGKSPILDKAVNAAVDAGIHFAVAAGNDNADSCNYSPAAAENAVTVGASTLADERAYFSNYGKCNDIFAPGLNIQSTWIGSKYAVNTISGTSMASPHVAGLLAYLLSLQPAKDSAFAVADISPKKLKANLISIATVGALTDVPSNTANILAWNGGGESNYSAIVEKGGYKATHRPTMLEEIESEAKVASKKVYSEGDELAHKVAELTEKVEDLIAGELKDMFRELKRE.

Positions 1 to 16 (MRGALAGLSLATLATA) are cleaved as a signal peptide. A propeptide spans 17–138 (SPVLVNSIHN…ERDQEVHVLG (122 aa)) (removed in mature form). Residues 44 to 136 (YMIKFKDHVT…LVERDQEVHV (93 aa)) form the Inhibitor I9 domain. Positions 148 to 454 (PWGLARISHR…GGESNYSAIV (307 aa)) constitute a Peptidase S8 domain. Catalysis depends on charge relay system residues aspartate 184 and histidine 216. An igE-binding region spans residues 244–298 (RSNGSGSMSDVVKGVEYAAESHLEQVSITKKGKRKGFKGSTANMSLGGGKSPILD). 2 N-linked (GlcNAc...) asparagine glycosylation sites follow: asparagine 246 and asparagine 286. Catalysis depends on serine 382, which acts as the Charge relay system. Asparagine 449 carries N-linked (GlcNAc...) asparagine glycosylation. Residues 460 to 518 (KATHRPTMLEEIESEAKVASKKVYSEGDELAHKVAELTEKVEDLIAGELKDMFRELKRE) constitute a propeptide, removed in mature form.

Belongs to the peptidase S8 family.

Functionally, serine protease. This chain is Subtilisin-like serine protease Cla h 9.0101, found in Davidiella tassiana (Mycosphaerella tassiana).